Consider the following 116-residue polypeptide: MTRVKRGYVARKRRKKVLSLTKGFRGSSSVLFRSANQRNMKALKYAYRDRRKMKREFRKLWITRINAATRMSNMTYSTFIHKLKKANIVLNRKLLAQLAVRDQQVFQQLFSYIEGV.

The protein belongs to the bacterial ribosomal protein bL20 family.

It localises to the plastid. It is found in the chloroplast. Functionally, binds directly to 23S ribosomal RNA and is necessary for the in vitro assembly process of the 50S ribosomal subunit. It is not involved in the protein synthesizing functions of that subunit. This chain is Large ribosomal subunit protein bL20c, found in Oltmannsiellopsis viridis (Marine flagellate).